Here is a 415-residue protein sequence, read N- to C-terminus: Alditol oxidase (415 aa).

The region spanning 12-179 (ITYTAKEVHR…TALTLDLEPA (168 aa)) is the FAD-binding PCMH-type domain. Pros-8alpha-FAD histidine is present on His46. FAD contacts are provided by residues Ser106, Ser111, Gly114, 118 to 121 (TGTH), and Val169. Ser106 is a xylitol binding site. 3 residues coordinate xylitol: Glu317, Arg319, and Thr342. Arg319 lines the FAD pocket. Residue His369 coordinates FAD. Lys372 lines the xylitol pocket.

The protein belongs to the oxygen-dependent FAD-linked oxidoreductase family. Monomer. It depends on FAD as a cofactor.

It carries out the reaction an alditol + O2 = an aldose + H2O2. It catalyses the reaction xylitol + O2 = D-xylose + H2O2. The catalysed reaction is D-sorbitol + O2 = D-glucose + H2O2. Its function is as follows. Oxidase that performs selective oxidation of the terminal primary hydroxyl group of several alditols, with a reduction of O2 to H2O2. Shows highest activity on xylitol and D-sorbitol, and to a lesser extent, can also use galactitol, D-mannitol, and D-arabitol as substrates in vitro. Is not active on D-glucose, D-xylose, D-galactose, D-mannose, D-fructose, L-sorbose, L-fucose, myoinositol, glycerol, ethyl alcohol, and meso-erythritol. This Streptomyces sp. (strain IKD472 / FERM P-14339) protein is Alditol oxidase.